Reading from the N-terminus, the 194-residue chain is Naphthalene 1,2-dioxygenase system, small oxygenase component (194 aa).

Belongs to the bacterial ring-hydroxylating dioxygenase beta subunit family. In terms of assembly, the naphthalene dioxygenase (NDO) multicomponent enzyme system is composed of an electron transfer component and a dioxygenase component (iron sulfur protein (ISP)). The electron transfer component is composed of a ferredoxin reductase (NagAa) and a ferredoxin (NagAb), and the dioxygenase component is formed by a large alpha subunit (NagAc) and a small beta subunit (NagAd).

Its pathway is aromatic compound metabolism; naphthalene degradation. Its function is as follows. Component of the naphthalene dioxygenase (NDO) multicomponent enzyme system which catalyzes the incorporation of both atoms of molecular oxygen into naphthalene to form cis-(1R,2S)-dihydroxy-1,2-dihydronaphthalene. Also able to use styrene as substrate. The beta subunit seems to have a structural role in the holoenzyme. In Ralstonia sp, this protein is Naphthalene 1,2-dioxygenase system, small oxygenase component.